We begin with the raw amino-acid sequence, 180 residues long: Acireductone dioxygenase (180 aa).

The Fe(2+) site is built by histidine 99, histidine 101, glutamate 105, and histidine 145. 4 residues coordinate Ni(2+): histidine 99, histidine 101, glutamate 105, and histidine 145.

Belongs to the acireductone dioxygenase (ARD) family. As to quaternary structure, monomer. It depends on Fe(2+) as a cofactor. Ni(2+) is required as a cofactor.

The catalysed reaction is 1,2-dihydroxy-5-(methylsulfanyl)pent-1-en-3-one + O2 = 3-(methylsulfanyl)propanoate + CO + formate + 2 H(+). The enzyme catalyses 1,2-dihydroxy-5-(methylsulfanyl)pent-1-en-3-one + O2 = 4-methylsulfanyl-2-oxobutanoate + formate + 2 H(+). It participates in amino-acid biosynthesis; L-methionine biosynthesis via salvage pathway; L-methionine from S-methyl-5-thio-alpha-D-ribose 1-phosphate: step 5/6. Functionally, catalyzes 2 different reactions between oxygen and the acireductone 1,2-dihydroxy-3-keto-5-methylthiopentene (DHK-MTPene) depending upon the metal bound in the active site. Fe-containing acireductone dioxygenase (Fe-ARD) produces formate and 2-keto-4-methylthiobutyrate (KMTB), the alpha-ketoacid precursor of methionine in the methionine recycle pathway. Ni-containing acireductone dioxygenase (Ni-ARD) produces methylthiopropionate, carbon monoxide and formate, and does not lie on the methionine recycle pathway. This is Acireductone dioxygenase from Geobacillus kaustophilus (strain HTA426).